A 210-amino-acid chain; its full sequence is Ribosomal RNA large subunit methyltransferase E (210 aa).

5 residues coordinate S-adenosyl-L-methionine: Gly-61, Trp-63, Asp-81, Asp-97, and Asp-122. Lys-162 acts as the Proton acceptor in catalysis. A compositionally biased stretch (basic and acidic residues) spans 187 to 196; that stretch reads KPEASRKRSP. Residues 187–210 form a disordered region; sequence KPEASRKRSPEVYALGQGKRAHMK.

It belongs to the class I-like SAM-binding methyltransferase superfamily. RNA methyltransferase RlmE family.

The protein localises to the cytoplasm. It carries out the reaction uridine(2552) in 23S rRNA + S-adenosyl-L-methionine = 2'-O-methyluridine(2552) in 23S rRNA + S-adenosyl-L-homocysteine + H(+). Its function is as follows. Specifically methylates the uridine in position 2552 of 23S rRNA at the 2'-O position of the ribose in the fully assembled 50S ribosomal subunit. The protein is Ribosomal RNA large subunit methyltransferase E of Stenotrophomonas maltophilia (strain K279a).